An 84-amino-acid chain; its full sequence is Tripartite terminase subunit 2 (84 aa).

The protein belongs to the herpesviridae TRM2 protein family. As to quaternary structure, associates with TRM1 and TRM3 to form the tripartite terminase complex.

It localises to the host nucleus. In terms of biological role, component of the molecular motor that translocates viral genomic DNA in empty capsid during DNA packaging. Forms a tripartite terminase complex together with TRM1 and TRM3 in the host cytoplasm. Once the complex reaches the host nucleus, it interacts with the capsid portal vertex. This portal forms a ring in which genomic DNA is translocated into the capsid. In Alcelaphine herpesvirus 1 (strain C500) (AlHV-1), this protein is Tripartite terminase subunit 2.